The chain runs to 391 residues: Succinate--CoA ligase [ADP-forming] subunit beta (391 aa).

Residues 9-246 form the ATP-grasp domain; that stretch reads KHLFADYDIP…ITQEDEAEVQ (238 aa). Residues Lys-46, 53-55, Glu-99, Leu-102, and Glu-107 each bind ATP; that span reads GRG. Residues Asn-199 and Asp-213 each contribute to the Mg(2+) site. Substrate is bound by residues Asn-266 and 323-325; that span reads GIV.

Belongs to the succinate/malate CoA ligase beta subunit family. As to quaternary structure, heterotetramer of two alpha and two beta subunits. Requires Mg(2+) as cofactor.

The catalysed reaction is succinate + ATP + CoA = succinyl-CoA + ADP + phosphate. It catalyses the reaction GTP + succinate + CoA = succinyl-CoA + GDP + phosphate. The protein operates within carbohydrate metabolism; tricarboxylic acid cycle; succinate from succinyl-CoA (ligase route): step 1/1. Succinyl-CoA synthetase functions in the citric acid cycle (TCA), coupling the hydrolysis of succinyl-CoA to the synthesis of either ATP or GTP and thus represents the only step of substrate-level phosphorylation in the TCA. The beta subunit provides nucleotide specificity of the enzyme and binds the substrate succinate, while the binding sites for coenzyme A and phosphate are found in the alpha subunit. This Alkalilimnicola ehrlichii (strain ATCC BAA-1101 / DSM 17681 / MLHE-1) protein is Succinate--CoA ligase [ADP-forming] subunit beta.